A 337-amino-acid chain; its full sequence is Glyceraldehyde-3-phosphate dehydrogenase (337 aa).

Residues Arg17 to Ile18, Asp39, Lys83, and Ser125 contribute to the NAD(+) site. Residues Ser156–Thr158, Thr187, Arg202, Thr215–Gly216, and Arg238 contribute to the D-glyceraldehyde 3-phosphate site. Residue Cys157 is the Nucleophile of the active site. Residue Asn319 participates in NAD(+) binding.

It belongs to the glyceraldehyde-3-phosphate dehydrogenase family. In terms of assembly, homotetramer.

It localises to the cytoplasm. It catalyses the reaction D-glyceraldehyde 3-phosphate + phosphate + NAD(+) = (2R)-3-phospho-glyceroyl phosphate + NADH + H(+). It functions in the pathway carbohydrate degradation; glycolysis; pyruvate from D-glyceraldehyde 3-phosphate: step 1/5. In terms of biological role, catalyzes the oxidative phosphorylation of glyceraldehyde 3-phosphate (G3P) to 1,3-bisphosphoglycerate (BPG) using the cofactor NAD. The first reaction step involves the formation of a hemiacetal intermediate between G3P and a cysteine residue, and this hemiacetal intermediate is then oxidized to a thioester, with concomitant reduction of NAD to NADH. The reduced NADH is then exchanged with the second NAD, and the thioester is attacked by a nucleophilic inorganic phosphate to produce BPG. The polypeptide is Glyceraldehyde-3-phosphate dehydrogenase (gapA) (Mycoplasma genitalium (strain ATCC 33530 / DSM 19775 / NCTC 10195 / G37) (Mycoplasmoides genitalium)).